The chain runs to 63 residues: DNA gyrase inhibitor YacG (63 aa).

Zn(2+) contacts are provided by cysteine 10, cysteine 13, cysteine 29, and cysteine 33.

It belongs to the DNA gyrase inhibitor YacG family. In terms of assembly, interacts with GyrB. Requires Zn(2+) as cofactor.

In terms of biological role, inhibits all the catalytic activities of DNA gyrase by preventing its interaction with DNA. Acts by binding directly to the C-terminal domain of GyrB, which probably disrupts DNA binding by the gyrase. The sequence is that of DNA gyrase inhibitor YacG from Chromobacterium violaceum (strain ATCC 12472 / DSM 30191 / JCM 1249 / CCUG 213 / NBRC 12614 / NCIMB 9131 / NCTC 9757 / MK).